Reading from the N-terminus, the 325-residue chain is Alpha-cuprenene synthase COP6 (325 aa).

Residues Asp102, Glu166, Asn224, Ser228, and Glu232 each contribute to the Mg(2+) site.

This sequence belongs to the trichodiene synthase family. The cofactor is Mg(2+).

In terms of biological role, alpha-cuprenene synthase; part of the gene cluster that mediates the biosynthesis of alpha-cuprenene and oxidized derivatives. The alpha-cuprenene synthase COP6 is the only sesquiterpene synthase identified in C.cinereus that appears to be part of a biosynthetic gene cluster and is highly specific since it catalyzes the cyclization of (2E,6E)-farnesyl diphosphate into only one product, alpha-cuprenene. COP6 is also able to perform the cyclization of geranyl diphosphate. The cytochrome P450 monooxygenase COX2 then oxidizes the cyclohexadiene ring of alpha-cuprenene at positions 1 and 4, yielding first alpha-cuparene, followed by alpha-cuparophenol and a further yet unidentified compound resulting from one additional oxidation step. The cytochrome P450 monooxygenase COX1 then likely catalyzes the oxidation at position 9 of the pentane ring of alpha-cuprenene to give the corresponding hydroxy or ketone derivatives. This Coprinopsis cinerea (strain Okayama-7 / 130 / ATCC MYA-4618 / FGSC 9003) (Inky cap fungus) protein is Alpha-cuprenene synthase COP6.